The following is a 938-amino-acid chain: Isoleucine--tRNA ligase (938 aa).

The 'HIGH' region motif lies at 58-68 (PYANGSIHIGH). The residue at position 183 (Lys-183) is an N6-acetyllysine. L-isoleucyl-5'-AMP is bound at residue Glu-561. Positions 602–606 (KMSKS) match the 'KMSKS' region motif. Residue Lys-605 participates in ATP binding. Zn(2+)-binding residues include Cys-901, Cys-904, Cys-921, and Cys-924.

Belongs to the class-I aminoacyl-tRNA synthetase family. IleS type 1 subfamily. Monomer. It depends on Zn(2+) as a cofactor.

It is found in the cytoplasm. The enzyme catalyses tRNA(Ile) + L-isoleucine + ATP = L-isoleucyl-tRNA(Ile) + AMP + diphosphate. Catalyzes the attachment of isoleucine to tRNA(Ile). As IleRS can inadvertently accommodate and process structurally similar amino acids such as valine, to avoid such errors it has two additional distinct tRNA(Ile)-dependent editing activities. One activity is designated as 'pretransfer' editing and involves the hydrolysis of activated Val-AMP. The other activity is designated 'posttransfer' editing and involves deacylation of mischarged Val-tRNA(Ile). This chain is Isoleucine--tRNA ligase, found in Escherichia coli (strain 55989 / EAEC).